Consider the following 750-residue polypeptide: Polyribonucleotide nucleotidyltransferase (750 aa).

Aspartate 519 and aspartate 525 together coordinate Mg(2+). In terms of domain architecture, KH spans proline 585–isoleucine 644. Positions glycine 656 to valine 728 constitute an S1 motif domain. The disordered stretch occupies residues leucine 725–glutamate 750. Acidic residues predominate over residues alanine 730 to glutamate 750.

The protein belongs to the polyribonucleotide nucleotidyltransferase family. Mg(2+) serves as cofactor.

The protein localises to the cytoplasm. It catalyses the reaction RNA(n+1) + phosphate = RNA(n) + a ribonucleoside 5'-diphosphate. Involved in mRNA degradation. Catalyzes the phosphorolysis of single-stranded polyribonucleotides processively in the 3'- to 5'-direction. The sequence is that of Polyribonucleotide nucleotidyltransferase from Paenarthrobacter aurescens (strain TC1).